Consider the following 112-residue polypeptide: Colipase (112 aa).

The signal sequence occupies residues 1–17 (MEKILILLLVALSVAYA). Positions 18-22 (APGPR) are cleaved as a propeptide — enterostatin, activation peptide. 5 cysteine pairs are disulfide-bonded: cysteine 34/cysteine 45, cysteine 40/cysteine 56, cysteine 44/cysteine 78, cysteine 66/cysteine 86, and cysteine 80/cysteine 104.

This sequence belongs to the colipase family. As to quaternary structure, forms a 1:1 stoichiometric complex with pancreatic lipase. In terms of tissue distribution, expressed by the pancreas.

It localises to the secreted. In terms of biological role, colipase is a cofactor of pancreatic lipase. It allows the lipase to anchor itself to the lipid-water interface. Without colipase the enzyme is washed off by bile salts, which have an inhibitory effect on the lipase. Enterostatin has a biological activity as a satiety signal. This chain is Colipase, found in Homo sapiens (Human).